The following is a 445-amino-acid chain: ATP synthase subunit b-delta (445 aa).

Positions M1 to A168 are ATP synthase subunit b. A helical transmembrane segment spans residues I3 to V23. Positions S169 to D445 are ATP synthase subunit delta.

This sequence in the N-terminal section; belongs to the ATPase B chain family. The protein in the C-terminal section; belongs to the ATPase delta chain family. In terms of assembly, F-type ATPases have 2 components, F(1) - the catalytic core - and F(0) - the membrane proton channel. F(1) has five subunits: alpha(3), beta(3), gamma(1), delta(1), epsilon(1). F(0) has three main subunits: a(1), b(2) and c(10-14). The alpha and beta chains form an alternating ring which encloses part of the gamma chain. F(1) is attached to F(0) by a central stalk formed by the gamma and epsilon chains, while a peripheral stalk is formed by the delta and b chains.

The protein localises to the cell membrane. F(1)F(0) ATP synthase produces ATP from ADP in the presence of a proton or sodium gradient. F-type ATPases consist of two structural domains, F(1) containing the extramembraneous catalytic core and F(0) containing the membrane proton channel, linked together by a central stalk and a peripheral stalk. During catalysis, ATP synthesis in the catalytic domain of F(1) is coupled via a rotary mechanism of the central stalk subunits to proton translocation. In terms of biological role, this fusion protein includes a component of the F(0) channel (subunit b) and of the F(1) subunit (subunit delta). Two copies of subunit b and one of delta together form the peripheral 'stator' stalk which links F(1) to F(0). In Mycolicibacterium vanbaalenii (strain DSM 7251 / JCM 13017 / BCRC 16820 / KCTC 9966 / NRRL B-24157 / PYR-1) (Mycobacterium vanbaalenii), this protein is ATP synthase subunit b-delta (atpFH).